The following is a 364-amino-acid chain: Dual-specificity RNA methyltransferase RlmN (364 aa).

The Proton acceptor role is filled by glutamate 91. One can recognise a Radical SAM core domain in the interval 97-333 (ESDRGTLCIS…VTVRKTRGDD (237 aa)). The cysteines at positions 104 and 338 are disulfide-linked. Residues cysteine 111, cysteine 115, and cysteine 118 each contribute to the [4Fe-4S] cluster site. S-adenosyl-L-methionine contacts are provided by residues 164 to 165 (GE), serine 196, 218 to 220 (SLH), and asparagine 295. The active-site S-methylcysteine intermediate is the cysteine 338.

Belongs to the radical SAM superfamily. RlmN family. [4Fe-4S] cluster serves as cofactor.

The protein resides in the cytoplasm. It carries out the reaction adenosine(2503) in 23S rRNA + 2 reduced [2Fe-2S]-[ferredoxin] + 2 S-adenosyl-L-methionine = 2-methyladenosine(2503) in 23S rRNA + 5'-deoxyadenosine + L-methionine + 2 oxidized [2Fe-2S]-[ferredoxin] + S-adenosyl-L-homocysteine. The enzyme catalyses adenosine(37) in tRNA + 2 reduced [2Fe-2S]-[ferredoxin] + 2 S-adenosyl-L-methionine = 2-methyladenosine(37) in tRNA + 5'-deoxyadenosine + L-methionine + 2 oxidized [2Fe-2S]-[ferredoxin] + S-adenosyl-L-homocysteine. Its function is as follows. Specifically methylates position 2 of adenine 2503 in 23S rRNA and position 2 of adenine 37 in tRNAs. m2A2503 modification seems to play a crucial role in the proofreading step occurring at the peptidyl transferase center and thus would serve to optimize ribosomal fidelity. This is Dual-specificity RNA methyltransferase RlmN from Neisseria gonorrhoeae (strain ATCC 700825 / FA 1090).